The chain runs to 455 residues: Virion host shutoff protein (455 aa).

Belongs to the herpesviridae VHS protein family.

It is found in the virion. Its function is as follows. Minor structural protein that acts as an endoribonuclease during lytic infection. Degrades host mRNAs in the cytoplasm by cutting them at preferred sites, including some in regions of translation initiation. This Homo sapiens (Human) protein is Virion host shutoff protein (17).